A 360-amino-acid polypeptide reads, in one-letter code: Phospho-N-acetylmuramoyl-pentapeptide-transferase (360 aa).

10 helical membrane passes run 2-22 (IAIL…TPLF), 52-72 (MGGV…NISA), 80-100 (GLLL…DDFI), 114-134 (WKII…LQFP), 156-176 (LAFA…NFLI), 189-209 (LDGL…VVTM), 235-255 (LAIV…WNAS), 259-279 (IFMG…LSIL), 284-304 (FLAV…VIQI), and 338-358 (FWLI…AEWV).

This sequence belongs to the glycosyltransferase 4 family. MraY subfamily. Requires Mg(2+) as cofactor.

The protein localises to the cell membrane. The catalysed reaction is UDP-N-acetyl-alpha-D-muramoyl-L-alanyl-gamma-D-glutamyl-meso-2,6-diaminopimeloyl-D-alanyl-D-alanine + di-trans,octa-cis-undecaprenyl phosphate = di-trans,octa-cis-undecaprenyl diphospho-N-acetyl-alpha-D-muramoyl-L-alanyl-D-glutamyl-meso-2,6-diaminopimeloyl-D-alanyl-D-alanine + UMP. It participates in cell wall biogenesis; peptidoglycan biosynthesis. Catalyzes the initial step of the lipid cycle reactions in the biosynthesis of the cell wall peptidoglycan: transfers peptidoglycan precursor phospho-MurNAc-pentapeptide from UDP-MurNAc-pentapeptide onto the lipid carrier undecaprenyl phosphate, yielding undecaprenyl-pyrophosphoryl-MurNAc-pentapeptide, known as lipid I. The polypeptide is Phospho-N-acetylmuramoyl-pentapeptide-transferase (Beutenbergia cavernae (strain ATCC BAA-8 / DSM 12333 / CCUG 43141 / JCM 11478 / NBRC 16432 / NCIMB 13614 / HKI 0122)).